Reading from the N-terminus, the 276-residue chain is tRNA (guanine-N(7)-)-methyltransferase (276 aa).

Residues methionine 1–arginine 36 are disordered. Alanine 2 carries the post-translational modification N-acetylalanine. Serine 27 carries the post-translational modification Phosphoserine; by PKB/AKT1 and RPS6KA3. S-adenosyl-L-homocysteine is bound by residues glycine 84, glutamate 107, isoleucine 108, arginine 109, asparagine 140, alanine 141, and leucine 160. Residues glycine 84 and glutamate 107 each contribute to the S-adenosyl-L-methionine site. S-adenosyl-L-methionine-binding residues include arginine 109, asparagine 140, alanine 141, and leucine 160. The active site involves aspartate 163. The alphaC helix stretch occupies residues proline 164 to lysine 172. S-adenosyl-L-homocysteine-binding residues include threonine 238 and glutamate 240. Residues threonine 238 and glutamate 240 each coordinate S-adenosyl-L-methionine. Positions threonine 238 to arginine 246 are alpha6 helix.

Belongs to the class I-like SAM-binding methyltransferase superfamily. TrmB family. In terms of assembly, catalytic component of the METTL1-WDR4 complex, composed of METTL1 and WDR4. In terms of processing, phosphorylation at Ser-27 by PKB/AKT1 inactivates its methyltransferase activity via a steric interference mechanism in the active site that locally disrupts the catalytic center. Phosphorylation at Ser-27 does not affect the interaction with WDR4. Ubiquitous.

Its subcellular location is the nucleus. It carries out the reaction guanosine(46) in tRNA + S-adenosyl-L-methionine = N(7)-methylguanosine(46) in tRNA + S-adenosyl-L-homocysteine. It catalyses the reaction a guanosine in mRNA + S-adenosyl-L-methionine = an N(7)-methylguanosine in mRNA + S-adenosyl-L-homocysteine. The catalysed reaction is a guanosine in miRNA + S-adenosyl-L-methionine = an N(7)-methylguanosine in miRNA + S-adenosyl-L-homocysteine. Its pathway is tRNA modification; N(7)-methylguanine-tRNA biosynthesis. Catalytic component of METTL1-WDR4 methyltransferase complex that mediates the formation of N(7)-methylguanine in a subset of RNA species, such as tRNAs, mRNAs and microRNAs (miRNAs). Catalyzes the formation of N(7)-methylguanine at position 46 (m7G46) in a large subset of tRNAs that contain the 5'-RAGGU-3' motif within the variable loop. M7G46 interacts with C13-G22 in the D-loop to stabilize tRNA tertiary structure and protect tRNAs from decay. Also acts as a methyltransferase for a subset of internal N(7)-methylguanine in mRNAs. Internal N(7)-methylguanine methylation of mRNAs in response to stress promotes their relocalization to stress granules, thereby suppressing their translation. Also methylates a specific subset of miRNAs, such as let-7. N(7)-methylguanine methylation of let-7 miRNA promotes let-7 miRNA processing by disrupting an inhibitory secondary structure within the primary miRNA transcript (pri-miRNA). Acts as a regulator of embryonic stem cell self-renewal and differentiation. The chain is tRNA (guanine-N(7)-)-methyltransferase from Homo sapiens (Human).